Consider the following 638-residue polypeptide: Exotoxin A (638 aa).

Residues 1–25 (MHLTPHWIPLVASLGLLAGGSFASA) form the signal peptide. A domain Ia (required for target cell recognition) region spans residues 26–277 (AEEAFDLWNE…VISHRLHFPE (252 aa)). The tract at residues 278-389 (GGSLAALTAH…TGNDEAGAAS (112 aa)) is II (required for translocation in target cell cytoplasm). Cysteine 290 and cysteine 312 form a disulfide bridge. The domain Ib stretch occupies residues 390-429 (ADVVSLTCPVAAGECAGPADSGDALLERNYPTGAEFLGDG). The tract at residues 430–638 (GDISFSTRGT…PGKPPREDLK (209 aa)) is III (required for ADP-ribosyl activity). Residues 465–467 (HGT), serine 474, 479–485 (GVRARSQ), and glutamate 578 contribute to the NAD(+) site. Glutamate 578 is an active-site residue. Residues 596 to 638 (IPTDPRNVGGDLDPSSIPDKEQAISALPDYASQPGKPPREDLK) form a disordered region.

Post-translationally, the 8 cysteines participate in intrachain disulfide bonds.

The enzyme catalyses diphthamide-[translation elongation factor 2] + NAD(+) = N-(ADP-D-ribosyl)diphthamide-[translation elongation factor 2] + nicotinamide + H(+). Its activity is regulated as follows. Inhibited by 1,8-naphthalimide (NAP) as well as a number of poly(ADP-ribose) polymerase inhibitors and other compounds. Functionally, an NAD-dependent ADP-ribosyltransferase (ADPRT). Catalyzes the transfer of the ADP ribosyl moiety of oxidized NAD (NAD(+)) onto eukaryotic elongation factor 2 (eEF-2) thus arresting protein synthesis. Has an LD(50) of 65 ng/ml against the human lung epithelial cell line C38. This is Exotoxin A from Pseudomonas aeruginosa (strain ATCC 15692 / DSM 22644 / CIP 104116 / JCM 14847 / LMG 12228 / 1C / PRS 101 / PAO1).